The chain runs to 354 residues: Chorismate synthase (354 aa).

Arg46 lines the NADP(+) pocket. Residues 123–125 (RVS), 233–234 (NG), Gly273, 288–292 (KPTPS), and Arg314 each bind FMN.

Belongs to the chorismate synthase family. In terms of assembly, homotetramer. FMNH2 is required as a cofactor.

The catalysed reaction is 5-O-(1-carboxyvinyl)-3-phosphoshikimate = chorismate + phosphate. It functions in the pathway metabolic intermediate biosynthesis; chorismate biosynthesis; chorismate from D-erythrose 4-phosphate and phosphoenolpyruvate: step 7/7. Its function is as follows. Catalyzes the anti-1,4-elimination of the C-3 phosphate and the C-6 proR hydrogen from 5-enolpyruvylshikimate-3-phosphate (EPSP) to yield chorismate, which is the branch point compound that serves as the starting substrate for the three terminal pathways of aromatic amino acid biosynthesis. This reaction introduces a second double bond into the aromatic ring system. The polypeptide is Chorismate synthase (Campylobacter curvus (strain 525.92)).